A 484-amino-acid chain; its full sequence is UDP-N-acetylmuramoyl-L-alanyl-D-glutamate--2,6-diaminopimelate ligase (484 aa).

110 to 116 contributes to the ATP binding site; the sequence is GTNGKTT. UDP-N-acetyl-alpha-D-muramoyl-L-alanyl-D-glutamate is bound by residues 152-153, S179, and R187; that span reads TT. The residue at position 219 (K219) is an N6-carboxylysine. Residues R381, 405-408, G455, and E459 each bind meso-2,6-diaminopimelate; that span reads DNPR. The Meso-diaminopimelate recognition motif motif lies at 405 to 408; that stretch reads DNPR.

Belongs to the MurCDEF family. MurE subfamily. It depends on Mg(2+) as a cofactor. Carboxylation is probably crucial for Mg(2+) binding and, consequently, for the gamma-phosphate positioning of ATP.

The protein localises to the cytoplasm. It carries out the reaction UDP-N-acetyl-alpha-D-muramoyl-L-alanyl-D-glutamate + meso-2,6-diaminopimelate + ATP = UDP-N-acetyl-alpha-D-muramoyl-L-alanyl-gamma-D-glutamyl-meso-2,6-diaminopimelate + ADP + phosphate + H(+). Its pathway is cell wall biogenesis; peptidoglycan biosynthesis. In terms of biological role, catalyzes the addition of meso-diaminopimelic acid to the nucleotide precursor UDP-N-acetylmuramoyl-L-alanyl-D-glutamate (UMAG) in the biosynthesis of bacterial cell-wall peptidoglycan. The sequence is that of UDP-N-acetylmuramoyl-L-alanyl-D-glutamate--2,6-diaminopimelate ligase from Clostridium perfringens (strain 13 / Type A).